Here is a 624-residue protein sequence, read N- to C-terminus: Chaperone protein HtpG (624 aa).

An a; substrate-binding region spans residues 1–336 (MSMKGQETRG…SNDLPLNVSR (336 aa)). The tract at residues 337–552 (EILQDSRVTQ…ADEMSTQMAK (216 aa)) is b. Residues 553-624 (LFAAAGQQAP…IRRMNQLLTA (72 aa)) are c.

It belongs to the heat shock protein 90 family. Homodimer.

It is found in the cytoplasm. Functionally, molecular chaperone. Has ATPase activity. The protein is Chaperone protein HtpG of Yersinia enterocolitica serotype O:8 / biotype 1B (strain NCTC 13174 / 8081).